Reading from the N-terminus, the 505-residue chain is Aspartyl/glutamyl-tRNA(Asn/Gln) amidotransferase subunit B (505 aa).

Belongs to the GatB/GatE family. GatB subfamily. Heterotrimer of A, B and C subunits.

It carries out the reaction L-glutamyl-tRNA(Gln) + L-glutamine + ATP + H2O = L-glutaminyl-tRNA(Gln) + L-glutamate + ADP + phosphate + H(+). It catalyses the reaction L-aspartyl-tRNA(Asn) + L-glutamine + ATP + H2O = L-asparaginyl-tRNA(Asn) + L-glutamate + ADP + phosphate + 2 H(+). Allows the formation of correctly charged Asn-tRNA(Asn) or Gln-tRNA(Gln) through the transamidation of misacylated Asp-tRNA(Asn) or Glu-tRNA(Gln) in organisms which lack either or both of asparaginyl-tRNA or glutaminyl-tRNA synthetases. The reaction takes place in the presence of glutamine and ATP through an activated phospho-Asp-tRNA(Asn) or phospho-Glu-tRNA(Gln). The protein is Aspartyl/glutamyl-tRNA(Asn/Gln) amidotransferase subunit B of Haloarcula marismortui (strain ATCC 43049 / DSM 3752 / JCM 8966 / VKM B-1809) (Halobacterium marismortui).